The chain runs to 268 residues: Lipase (268 aa).

A signal peptide spans 1–34; the sequence is MRLSRRAATASALLLTPALALFGASAAVSAPRIQ. Catalysis depends on Ser44, which acts as the Nucleophile. Intrachain disulfides connect Cys61/Cys86, Cys127/Cys135, and Cys185/Cys232. His250 is a catalytic residue.

As to quaternary structure, monomer.

The protein localises to the secreted. It carries out the reaction a triacylglycerol + H2O = a diacylglycerol + a fatty acid + H(+). The enzyme catalyses hexadecanoyl-CoA + H2O = hexadecanoate + CoA + H(+). Its activity is regulated as follows. Inhibited by 3,4-dichloroisocoumarin and tetrahydrolipstatin in the absence of substrate, but by phenylmethylsulfonyl fluoride (PMSF) only in the presence of substrate. Several water-miscible solvents enhance the lipase hydrolytic activity in vitro. Tetrahydrofuran and N,N-dimethylformamide (both 50%) inactivate the enzyme with t1/2 of 5 minutes and t1/2 of 2 hours, respectively. In terms of biological role, catalyzes the hydrolysis of p-nitrophenyl esters, alpha- and beta-naphthyl esters, and triacylglycerols, with a preference for medium acyl chain length (C8-C12). Shows a much higher hydrolysis rate of glycerol esters of unsaturated C16 and C18 fatty acids than that of their saturated counterparts, and a preference for cis double bond. Is also able to hydrolyze several natural oils and Tween detergents. Also displays thioesterase and phospholipase activities, towards palmitoyl-coenzyme A and diheptanoyl glycerophosphocholine, respectively. Shows transesterification activity of racemic 1-phenyl ethanol with vinyl acetate in hexane, proceeding with partial (R)-enantioselectivity. The sequence is that of Lipase from Streptomyces rimosus.